The following is a 938-amino-acid chain: Isoleucine--tRNA ligase (938 aa).

Residues 58–68 (PYANGSIHIGH) carry the 'HIGH' region motif. Lys183 is subject to N6-acetyllysine. Glu561 contacts L-isoleucyl-5'-AMP. The 'KMSKS' region signature appears at 602–606 (KMSKS). Lys605 is an ATP binding site. The Zn(2+) site is built by Cys901, Cys904, Cys921, and Cys924.

The protein belongs to the class-I aminoacyl-tRNA synthetase family. IleS type 1 subfamily. Monomer. Zn(2+) serves as cofactor.

It is found in the cytoplasm. It catalyses the reaction tRNA(Ile) + L-isoleucine + ATP = L-isoleucyl-tRNA(Ile) + AMP + diphosphate. In terms of biological role, catalyzes the attachment of isoleucine to tRNA(Ile). As IleRS can inadvertently accommodate and process structurally similar amino acids such as valine, to avoid such errors it has two additional distinct tRNA(Ile)-dependent editing activities. One activity is designated as 'pretransfer' editing and involves the hydrolysis of activated Val-AMP. The other activity is designated 'posttransfer' editing and involves deacylation of mischarged Val-tRNA(Ile). This chain is Isoleucine--tRNA ligase, found in Shigella flexneri.